The sequence spans 427 residues: Serine--tRNA ligase (427 aa).

231-233 (TAE) contacts L-serine. 262 to 264 (RSE) lines the ATP pocket. L-serine is bound at residue Glu-285. An ATP-binding site is contributed by 349-352 (EISS). L-serine is bound at residue Ser-385.

This sequence belongs to the class-II aminoacyl-tRNA synthetase family. Type-1 seryl-tRNA synthetase subfamily. In terms of assembly, homodimer. The tRNA molecule binds across the dimer.

It is found in the cytoplasm. The enzyme catalyses tRNA(Ser) + L-serine + ATP = L-seryl-tRNA(Ser) + AMP + diphosphate + H(+). It carries out the reaction tRNA(Sec) + L-serine + ATP = L-seryl-tRNA(Sec) + AMP + diphosphate + H(+). It participates in aminoacyl-tRNA biosynthesis; selenocysteinyl-tRNA(Sec) biosynthesis; L-seryl-tRNA(Sec) from L-serine and tRNA(Sec): step 1/1. In terms of biological role, catalyzes the attachment of serine to tRNA(Ser). Is also able to aminoacylate tRNA(Sec) with serine, to form the misacylated tRNA L-seryl-tRNA(Sec), which will be further converted into selenocysteinyl-tRNA(Sec). This Rhizobium etli (strain CIAT 652) protein is Serine--tRNA ligase.